The primary structure comprises 237 residues: tRNA (guanine-N(7)-)-methyltransferase (237 aa).

S-adenosyl-L-methionine contacts are provided by glutamate 67, glutamate 92, aspartate 119, and aspartate 142. Residue aspartate 142 is part of the active site. Substrate contacts are provided by residues lysine 146, aspartate 178, and threonine 215–glutamate 218.

It belongs to the class I-like SAM-binding methyltransferase superfamily. TrmB family.

The enzyme catalyses guanosine(46) in tRNA + S-adenosyl-L-methionine = N(7)-methylguanosine(46) in tRNA + S-adenosyl-L-homocysteine. It participates in tRNA modification; N(7)-methylguanine-tRNA biosynthesis. Functionally, catalyzes the formation of N(7)-methylguanine at position 46 (m7G46) in tRNA. The protein is tRNA (guanine-N(7)-)-methyltransferase of Aeromonas hydrophila subsp. hydrophila (strain ATCC 7966 / DSM 30187 / BCRC 13018 / CCUG 14551 / JCM 1027 / KCTC 2358 / NCIMB 9240 / NCTC 8049).